Here is a 365-residue protein sequence, read N- to C-terminus: 3-isopropylmalate dehydrogenase (365 aa).

Position 80–91 (80–91) interacts with NAD(+); the sequence is GPKWGTGEVRPE. Substrate is bound by residues Arg98, Arg108, Arg137, and Asp226. Asp226, Asp251, and Asp255 together coordinate Mg(2+). NAD(+) is bound at residue 290–301; that stretch reads GSAPDLPKNKVN.

It belongs to the isocitrate and isopropylmalate dehydrogenases family. Homodimer. Mg(2+) is required as a cofactor. Mn(2+) serves as cofactor.

The protein localises to the cytoplasm. The enzyme catalyses (2R,3S)-3-isopropylmalate + NAD(+) = 4-methyl-2-oxopentanoate + CO2 + NADH. It participates in amino-acid biosynthesis; L-leucine biosynthesis; L-leucine from 3-methyl-2-oxobutanoate: step 3/4. Its function is as follows. Catalyzes the oxidation of 3-carboxy-2-hydroxy-4-methylpentanoate (3-isopropylmalate) to 3-carboxy-4-methyl-2-oxopentanoate. The product decarboxylates to 4-methyl-2 oxopentanoate. The protein is 3-isopropylmalate dehydrogenase (LEU2) of Candida boidinii (Yeast).